The following is a 289-amino-acid chain: Acetyl-coenzyme A carboxylase carboxyl transferase subunit beta (289 aa).

The CoA carboxyltransferase N-terminal domain occupies 28–289 (VMTKCPKCKK…QGGEMAVWQS (262 aa)). Residues Cys-32, Cys-35, Cys-51, and Cys-54 each contribute to the Zn(2+) site. The segment at 32–54 (CPKCKKIMYTKEVLKNLKVCVNC) adopts a C4-type zinc-finger fold.

Belongs to the AccD/PCCB family. In terms of assembly, acetyl-CoA carboxylase is a heterohexamer composed of biotin carboxyl carrier protein (AccB), biotin carboxylase (AccC) and two subunits each of ACCase subunit alpha (AccA) and ACCase subunit beta (AccD). Zn(2+) is required as a cofactor.

The protein localises to the cytoplasm. It carries out the reaction N(6)-carboxybiotinyl-L-lysyl-[protein] + acetyl-CoA = N(6)-biotinyl-L-lysyl-[protein] + malonyl-CoA. The protein operates within lipid metabolism; malonyl-CoA biosynthesis; malonyl-CoA from acetyl-CoA: step 1/1. Functionally, component of the acetyl coenzyme A carboxylase (ACC) complex. Biotin carboxylase (BC) catalyzes the carboxylation of biotin on its carrier protein (BCCP) and then the CO(2) group is transferred by the transcarboxylase to acetyl-CoA to form malonyl-CoA. This Bacillus cereus (strain ZK / E33L) protein is Acetyl-coenzyme A carboxylase carboxyl transferase subunit beta.